Consider the following 340-residue polypeptide: Glucokinase (340 aa).

17 to 22 (GDIGGT) lines the ATP pocket.

It belongs to the bacterial glucokinase family.

The protein localises to the cytoplasm. The enzyme catalyses D-glucose + ATP = D-glucose 6-phosphate + ADP + H(+). In Allorhizobium ampelinum (strain ATCC BAA-846 / DSM 112012 / S4) (Agrobacterium vitis (strain S4)), this protein is Glucokinase.